A 192-amino-acid chain; its full sequence is Adenylate kinase (192 aa).

An ATP-binding site is contributed by 12–17; that stretch reads GSGKTT. An NMP region spans residues 34–63; the sequence is STGDLLRAEVASGSELGKTIDSFISKGNLV. AMP is bound by residues Thr35, Arg40, 61–63, 88–91, and Gln95; these read NLV and GYPR. Residues 130–136 form an LID region; it reads GRNRGAD. Position 131 (Arg131) interacts with ATP. The AMP site is built by Arg133 and Arg145. Residue Arg173 participates in ATP binding.

Belongs to the adenylate kinase family. Monomer.

Its subcellular location is the cytoplasm. It catalyses the reaction AMP + ATP = 2 ADP. It functions in the pathway purine metabolism; AMP biosynthesis via salvage pathway; AMP from ADP: step 1/1. Its function is as follows. Catalyzes the reversible transfer of the terminal phosphate group between ATP and AMP. Plays an important role in cellular energy homeostasis and in adenine nucleotide metabolism. The chain is Adenylate kinase from Campylobacter jejuni subsp. jejuni serotype O:2 (strain ATCC 700819 / NCTC 11168).